Here is a 468-residue protein sequence, read N- to C-terminus: ATP synthase subunit beta (468 aa).

155 to 162 (GGAGVGKT) contacts ATP.

Belongs to the ATPase alpha/beta chains family. As to quaternary structure, F-type ATPases have 2 components, CF(1) - the catalytic core - and CF(0) - the membrane proton channel. CF(1) has five subunits: alpha(3), beta(3), gamma(1), delta(1), epsilon(1). CF(0) has three main subunits: a(1), b(2) and c(9-12). The alpha and beta chains form an alternating ring which encloses part of the gamma chain. CF(1) is attached to CF(0) by a central stalk formed by the gamma and epsilon chains, while a peripheral stalk is formed by the delta and b chains.

It is found in the cell inner membrane. It carries out the reaction ATP + H2O + 4 H(+)(in) = ADP + phosphate + 5 H(+)(out). Produces ATP from ADP in the presence of a proton gradient across the membrane. The catalytic sites are hosted primarily by the beta subunits. The polypeptide is ATP synthase subunit beta (Thermotoga petrophila (strain ATCC BAA-488 / DSM 13995 / JCM 10881 / RKU-1)).